The sequence spans 242 residues: MVILGVNVDHIATVRQARKTFEPDPVMAATLAILGGADGITIHLREDRRHIQDRDLKILREVVPCELNLEMAATEEMINIALNIKPDMVTIVPEKRQELTTEGGLNVIELKDSLKEAIKKIKDAGIPVSLFINPERNDIECSKDIGADMVEIHTGYYSESRGDVQLKELERIKDAVAYSISLGLKTNAGHGLNYYNVKSIAAIKGLRGLYIGHSIIARAVLVGIEKAVREMKNLIKEACINA.

Asn-7 provides a ligand contact to 3-amino-2-oxopropyl phosphate. 9-10 lines the 1-deoxy-D-xylulose 5-phosphate pocket; that stretch reads DH. Arg-18 contributes to the 3-amino-2-oxopropyl phosphate binding site. The Proton acceptor role is filled by His-43. Residues Arg-45 and His-50 each coordinate 1-deoxy-D-xylulose 5-phosphate. Glu-70 serves as the catalytic Proton acceptor. Thr-100 lines the 1-deoxy-D-xylulose 5-phosphate pocket. Catalysis depends on His-190, which acts as the Proton donor. 3-amino-2-oxopropyl phosphate-binding positions include Gly-191 and 212 to 213; that span reads GH.

The protein belongs to the PNP synthase family. Homooctamer; tetramer of dimers.

Its subcellular location is the cytoplasm. The enzyme catalyses 3-amino-2-oxopropyl phosphate + 1-deoxy-D-xylulose 5-phosphate = pyridoxine 5'-phosphate + phosphate + 2 H2O + H(+). It functions in the pathway cofactor biosynthesis; pyridoxine 5'-phosphate biosynthesis; pyridoxine 5'-phosphate from D-erythrose 4-phosphate: step 5/5. Catalyzes the complicated ring closure reaction between the two acyclic compounds 1-deoxy-D-xylulose-5-phosphate (DXP) and 3-amino-2-oxopropyl phosphate (1-amino-acetone-3-phosphate or AAP) to form pyridoxine 5'-phosphate (PNP) and inorganic phosphate. The polypeptide is Pyridoxine 5'-phosphate synthase (Thermodesulfovibrio yellowstonii (strain ATCC 51303 / DSM 11347 / YP87)).